The following is a 294-amino-acid chain: Phosphoribosylaminoimidazole-succinocarboxamide synthase (294 aa).

Belongs to the SAICAR synthetase family.

The enzyme catalyses 5-amino-1-(5-phospho-D-ribosyl)imidazole-4-carboxylate + L-aspartate + ATP = (2S)-2-[5-amino-1-(5-phospho-beta-D-ribosyl)imidazole-4-carboxamido]succinate + ADP + phosphate + 2 H(+). The protein operates within purine metabolism; IMP biosynthesis via de novo pathway; 5-amino-1-(5-phospho-D-ribosyl)imidazole-4-carboxamide from 5-amino-1-(5-phospho-D-ribosyl)imidazole-4-carboxylate: step 1/2. This is Phosphoribosylaminoimidazole-succinocarboxamide synthase from Thermoplasma volcanium (strain ATCC 51530 / DSM 4299 / JCM 9571 / NBRC 15438 / GSS1).